We begin with the raw amino-acid sequence, 280 residues long: 2,3,4,5-tetrahydropyridine-2,6-dicarboxylate N-succinyltransferase (280 aa).

Residues Arg109 and Asp146 each coordinate substrate.

This sequence belongs to the transferase hexapeptide repeat family. In terms of assembly, homotrimer.

Its subcellular location is the cytoplasm. It carries out the reaction (S)-2,3,4,5-tetrahydrodipicolinate + succinyl-CoA + H2O = (S)-2-succinylamino-6-oxoheptanedioate + CoA. It functions in the pathway amino-acid biosynthesis; L-lysine biosynthesis via DAP pathway; LL-2,6-diaminopimelate from (S)-tetrahydrodipicolinate (succinylase route): step 1/3. The polypeptide is 2,3,4,5-tetrahydropyridine-2,6-dicarboxylate N-succinyltransferase (Blochmanniella floridana).